Here is a 314-residue protein sequence, read N- to C-terminus: Putative steroid dehydrogenase 1 (314 aa).

47 to 76 (ASWAVVTGATDGIGKSYSFELAKRGFNVYI) is a binding site for NADP(+). The active site involves Y202.

This sequence belongs to the short-chain dehydrogenases/reductases (SDR) family. 17-beta-HSD 3 subfamily.

The chain is Putative steroid dehydrogenase 1 (stdh-1) from Caenorhabditis elegans.